Reading from the N-terminus, the 165-residue chain is Cyclic pyranopterin monophosphate synthase (165 aa).

Substrate-binding positions include 79–81 (LCH) and 117–118 (ME). D132 is a catalytic residue.

Belongs to the MoaC family. As to quaternary structure, homohexamer; trimer of dimers.

The enzyme catalyses (8S)-3',8-cyclo-7,8-dihydroguanosine 5'-triphosphate = cyclic pyranopterin phosphate + diphosphate. The protein operates within cofactor biosynthesis; molybdopterin biosynthesis. Functionally, catalyzes the conversion of (8S)-3',8-cyclo-7,8-dihydroguanosine 5'-triphosphate to cyclic pyranopterin monophosphate (cPMP). This is Cyclic pyranopterin monophosphate synthase from Chloroflexus aggregans (strain MD-66 / DSM 9485).